A 740-amino-acid chain; its full sequence is MGPGLTLSGMTEQSSLFPAPAPKGSALVAAKIKALREQLNRWAHEYYVQDTPSVPDAEYDRAFQELQALEGAYPDLVTPDSPTQRVLGAVLDGLTPVRHRVPMLSIRTETDTEASGAQAFDARVRRELKLPPDAPPVEYVAEPKFDGLAMSLRYEGGRLVQAATRGDGEVGEDVTHNVRTIRQIPLSLPAGVPRVLEVRGEVYMRRADFDALNERQREKGDKTFVNPRNAAAGAVRQLDSGITAQRPLSFFAYGLGEVTPAAEGGPDFGTHFGMLQQLKEWGFPVAAQVQIAQGASELIAFHQRVGAERDALPYDIDGVVYKVNSLALQRQLGFVTREPRWAVAHKYPAQEMVTRVEGIDVQVGRTGKLTPVARLAPVFVGGVTVTNATLHNLFELRRKKVRVGDQVIVRRAGDVIPEVVGVVPAGAGLAVLAGSDALVDAASSADGTAPAQPLAGPRQPYVPNFRMPRQCPICGSAVVREPGEVNHRCSGGLFCPAQRKQAVLHFAQRRAMDIEGLGEKLVDQLVEGHVIRTLPDLYRLGLSSLAQLDRMAEKSAQNVLDALDKSKRTTLARFLFGLGIRHVGEATAKDLARHFGRLDAIMDAGVEQLLQVNDVGPVVAEAIHTFFAQPHNREVVEQLRACGVTWDESEPAAAATLPLAGMTVVLTGTLPTLGRDAAKDLLESAGAKVAGSVSKKTHYVVAGADAGSKLAKAQELGIPVLDEDGLRALLRGAPPNAGGG.

The disordered stretch occupies residues 1-20 (MGPGLTLSGMTEQSSLFPAP). Residues 56-60 (DAEYD), 105-106 (SI), and Glu-142 contribute to the NAD(+) site. The active-site N6-AMP-lysine intermediate is Lys-144. Residues Arg-165, Glu-201, Lys-322, and Lys-346 each contribute to the NAD(+) site. Zn(2+) contacts are provided by Cys-471, Cys-474, Cys-489, and Cys-495. The BRCT domain maps to 654 to 740 (AATLPLAGMT…RGAPPNAGGG (87 aa)).

It belongs to the NAD-dependent DNA ligase family. LigA subfamily. Mg(2+) is required as a cofactor. It depends on Mn(2+) as a cofactor.

It catalyses the reaction NAD(+) + (deoxyribonucleotide)n-3'-hydroxyl + 5'-phospho-(deoxyribonucleotide)m = (deoxyribonucleotide)n+m + AMP + beta-nicotinamide D-nucleotide.. Its function is as follows. DNA ligase that catalyzes the formation of phosphodiester linkages between 5'-phosphoryl and 3'-hydroxyl groups in double-stranded DNA using NAD as a coenzyme and as the energy source for the reaction. It is essential for DNA replication and repair of damaged DNA. This is DNA ligase from Acidovorax ebreus (strain TPSY) (Diaphorobacter sp. (strain TPSY)).